Consider the following 80-residue polypeptide: Acyl carrier protein (80 aa).

In terms of domain architecture, Carrier spans 4 to 79 (EAILEKVRSI…DAVKYIEDKQ (76 aa)). Ser39 carries the O-(pantetheine 4'-phosphoryl)serine modification.

Belongs to the acyl carrier protein (ACP) family. In terms of processing, 4'-phosphopantetheine is transferred from CoA to a specific serine of apo-ACP by AcpS. This modification is essential for activity because fatty acids are bound in thioester linkage to the sulfhydryl of the prosthetic group.

It localises to the cytoplasm. It functions in the pathway lipid metabolism; fatty acid biosynthesis. In terms of biological role, carrier of the growing fatty acid chain in fatty acid biosynthesis. This is Acyl carrier protein from Parasynechococcus marenigrum (strain WH8102).